The following is a 258-amino-acid chain: Imidazole glycerol phosphate synthase subunit HisF (258 aa).

Residues D11 and D130 contribute to the active site.

The protein belongs to the HisA/HisF family. Heterodimer of HisH and HisF.

The protein resides in the cytoplasm. It carries out the reaction 5-[(5-phospho-1-deoxy-D-ribulos-1-ylimino)methylamino]-1-(5-phospho-beta-D-ribosyl)imidazole-4-carboxamide + L-glutamine = D-erythro-1-(imidazol-4-yl)glycerol 3-phosphate + 5-amino-1-(5-phospho-beta-D-ribosyl)imidazole-4-carboxamide + L-glutamate + H(+). It participates in amino-acid biosynthesis; L-histidine biosynthesis; L-histidine from 5-phospho-alpha-D-ribose 1-diphosphate: step 5/9. IGPS catalyzes the conversion of PRFAR and glutamine to IGP, AICAR and glutamate. The HisF subunit catalyzes the cyclization activity that produces IGP and AICAR from PRFAR using the ammonia provided by the HisH subunit. The sequence is that of Imidazole glycerol phosphate synthase subunit HisF from Yersinia pestis (strain Pestoides F).